Consider the following 106-residue polypeptide: ATP-dependent Clp protease adapter protein ClpS (106 aa).

This sequence belongs to the ClpS family. Binds to the N-terminal domain of the chaperone ClpA.

Its function is as follows. Involved in the modulation of the specificity of the ClpAP-mediated ATP-dependent protein degradation. The sequence is that of ATP-dependent Clp protease adapter protein ClpS from Enterobacter sp. (strain 638).